The primary structure comprises 269 residues: GTP cyclohydrolase FolE2 2 (269 aa).

The protein belongs to the GTP cyclohydrolase IV family.

It carries out the reaction GTP + H2O = 7,8-dihydroneopterin 3'-triphosphate + formate + H(+). Its pathway is cofactor biosynthesis; 7,8-dihydroneopterin triphosphate biosynthesis; 7,8-dihydroneopterin triphosphate from GTP: step 1/1. Functionally, converts GTP to 7,8-dihydroneopterin triphosphate. The chain is GTP cyclohydrolase FolE2 2 from Burkholderia lata (strain ATCC 17760 / DSM 23089 / LMG 22485 / NCIMB 9086 / R18194 / 383).